The primary structure comprises 286 residues: ATP synthase gamma chain (286 aa).

Belongs to the ATPase gamma chain family. In terms of assembly, F-type ATPases have 2 components, CF(1) - the catalytic core - and CF(0) - the membrane proton channel. CF(1) has five subunits: alpha(3), beta(3), gamma(1), delta(1), epsilon(1). CF(0) has three main subunits: a, b and c.

The protein localises to the cell inner membrane. Functionally, produces ATP from ADP in the presence of a proton gradient across the membrane. The gamma chain is believed to be important in regulating ATPase activity and the flow of protons through the CF(0) complex. This chain is ATP synthase gamma chain, found in Pseudomonas putida (strain ATCC 700007 / DSM 6899 / JCM 31910 / BCRC 17059 / LMG 24140 / F1).